A 590-amino-acid polypeptide reads, in one-letter code: Bacillolysin (590 aa).

A signal peptide spans 1–24; the sequence is MKKVWFSLLGGAMLLGSVASGASA. Residues 25–286 constitute a propeptide, activation peptide; sequence ESSVSGPAQL…GSIVFQYDII (262 aa). Aspartate 339, aspartate 341, and aspartate 419 together coordinate Ca(2+). Histidine 423 contributes to the Zn(2+) binding site. The active site involves glutamate 424. Zn(2+) is bound by residues histidine 427 and glutamate 447. Residues aspartate 466, tyrosine 469, threonine 470, isoleucine 473, and aspartate 476 each coordinate Ca(2+). Histidine 507 functions as the Proton donor in the catalytic mechanism.

This sequence belongs to the peptidase M4 family. The cofactor is Ca(2+). It depends on Zn(2+) as a cofactor.

It localises to the secreted. The enzyme catalyses Similar, but not identical, to that of thermolysin.. Functionally, involved in the generation of beta- and alpha-amylases from the large amylase precursor. The sequence is that of Bacillolysin (npr) from Paenibacillus polymyxa (Bacillus polymyxa).